Consider the following 106-residue polypeptide: Transcriptional and immune response regulator (106 aa).

In terms of assembly, monomer. Interacts with NOTCH2 (via ANK repeats), the interaction inhibits the nuclear translocation of NOTCH2 N2ICD. Interacts (C-terminus) with CBY1 (C-terminus), TCIM competes with CTNNB1 for the interaction with CBY1. Ubiquitous. Expressed in thyroid papillary carcinoma. Expressed in liver, expression levels decrease in hepatocellular carcinoma. Slightly detected in normal lung, its expression is highly induced in lung cancer cells (at protein level).

It localises to the cytoplasm. The protein localises to the nucleus. It is found in the nucleolus. Its subcellular location is the nucleus speckle. Its function is as follows. Seems to be involved in the regulation of cell growth an differentiation, may play different and opposite roles depending on the tissue or cell type. May enhance the WNT-CTNNB1 pathway by relieving antagonistic activity of CBY1. Enhances the proliferation of follicular dendritic cells. Plays a role in the mitogen-activated MAPK2/3 signaling pathway, positively regulates G1-to-S-phase transition of the cell cycle. In endothelial cells, enhances key inflammatory mediators and inflammatory response through the modulation of NF-kappaB transcriptional regulatory activity. Involved in the regulation of heat shock response, seems to play a positive feedback with HSF1 to modulate heat-shock downstream gene expression. Plays a role in the regulation of hematopoiesis even if the mechanisms are unknown. In cancers such as thyroid or lung cancer, it has been described as promoter of cell proliferation, G1-to-S-phase transition and inhibitor of apoptosis. However, it negatively regulates self-renewal of liver cancer cells via suppresion of NOTCH2 signaling. The polypeptide is Transcriptional and immune response regulator (Homo sapiens (Human)).